A 1116-amino-acid polypeptide reads, in one-letter code: Electrogenic sodium bicarbonate cotransporter 4 (1116 aa).

Basic and acidic residues predominate over residues methionine 1–aspartate 14. Disordered regions lie at residues methionine 1–proline 92, proline 222–aspartate 257, and proline 431–glutamate 467. Residues methionine 1–serine 515 are Cytoplasmic-facing. Over residues serine 233–alanine 247 the composition is skewed to low complexity. A compositionally biased stretch (gly residues) spans serine 437–serine 464. Residues alanine 516–glycine 536 form a helical membrane-spanning segment. The Extracellular segment spans residues aspartate 537–leucine 558. A helical transmembrane segment spans residues phenylalanine 559–phenylalanine 579. Residues glutamate 580–tryptophan 600 lie on the Cytoplasmic side of the membrane. A helical transmembrane segment spans residues isoleucine 601–isoleucine 621. Residues lysine 622 to glycine 631 lie on the Extracellular side of the membrane. The chain crosses the membrane as a helical span at residues phenylalanine 632 to phenylalanine 652. Topologically, residues lysine 653–glutamine 730 are cytoplasmic. A helical transmembrane segment spans residues phenylalanine 731–leucine 751. Residues threonine 752–threonine 768 lie on the Extracellular side of the membrane. The helical transmembrane segment at leucine 769–phenylalanine 789 threads the bilayer. The Cytoplasmic segment spans residues glycine 790–asparagine 819. The helical transmembrane segment at proline 820–methionine 840 threads the bilayer. Residues aspartate 841 to aspartate 865 lie on the Extracellular side of the membrane. The chain crosses the membrane as a helical span at residues leucine 866–alanine 886. Over alanine 887 to threonine 922 the chain is Cytoplasmic. The helical transmembrane segment at glycine 923–isoleucine 943 threads the bilayer. The Extracellular portion of the chain corresponds to proline 944–methionine 945. The helical transmembrane segment at proline 946–tryptophan 966 threads the bilayer. The Cytoplasmic segment spans residues glutamate 967–histidine 987. 2 helical membrane-spanning segments follow: residues valine 988–tryptophan 1008 and isoleucine 1009–valine 1029. The Cytoplasmic segment spans residues arginine 1030–leucine 1116.

This sequence belongs to the anion exchanger (TC 2.A.31) family.

Its subcellular location is the apical cell membrane. The protein resides in the basolateral cell membrane. The enzyme catalyses 2 hydrogencarbonate(out) + Na(+)(out) = 2 hydrogencarbonate(in) + Na(+)(in). It catalyses the reaction 3 hydrogencarbonate(out) + Na(+)(out) = 3 hydrogencarbonate(in) + Na(+)(in). In terms of biological role, mediates sodium- and bicarbonate-dependent electrogenic sodium bicarbonate cotransport, with a Na(+):HCO3(-) stoichiometry varying from 1:2 to 1:3. This is Electrogenic sodium bicarbonate cotransporter 4 (Slc4a5) from Mus musculus (Mouse).